Reading from the N-terminus, the 778-residue chain is Aconitate hydratase, mitochondrial (778 aa).

The N-terminal 16 residues, 1 to 16 (MLSARSAIKRPIVRGL), are a transit peptide targeting the mitochondrion. Residues glutamine 95 and 188–190 (DSH) contribute to the substrate site. [4Fe-4S] cluster is bound at residue cysteine 382. Residue serine 391 is modified to Phosphoserine. Threonine 409 carries the post-translational modification Phosphothreonine. The [4Fe-4S] cluster site is built by cysteine 445 and cysteine 448. 2 residues coordinate substrate: arginine 471 and arginine 476. Serine 556 is modified (phosphoserine). Residues arginine 604 and 667–668 (SR) contribute to the substrate site.

It belongs to the aconitase/IPM isomerase family. Monomer. Binds to mitochondrial DNA (mtDNA) and identified as component of mitochondrial nucleoids. Requires [4Fe-4S] cluster as cofactor.

The protein localises to the mitochondrion. It is found in the cytoplasm. The catalysed reaction is citrate = D-threo-isocitrate. Its pathway is carbohydrate metabolism; tricarboxylic acid cycle; isocitrate from oxaloacetate: step 2/2. Subject to catabolite regulation. In terms of biological role, catalyzes the isomerization of citrate to isocitrate via cis-aconitate, a step in the citric acid cycle. Can also provide minor contributions to the reversible dehydration of (R)-homocitrate to cis-homoaconitate, a step in the alpha-aminoadipate pathway for lysine biosynthesis. Also plays an essential role in mtDNA maintenance. May directly protect mtDNA from accumulation of point mutations and ssDNA breaks as a component of mitochondrial nucleoids, or by preventing accumulation of iron citrate thereby alleviating its detrimental effects in mitochondria. In Saccharomyces cerevisiae (strain ATCC 204508 / S288c) (Baker's yeast), this protein is Aconitate hydratase, mitochondrial.